A 1246-amino-acid polypeptide reads, in one-letter code: Putative helicase L115 (1246 aa).

The interval 1–21 (MSKTITKKVNKKTKKSTKINP) is disordered. Positions 872 to 1030 (AKFTDGYHGF…YYMLKMLQTG (159 aa)) constitute a Helicase ATP-binding domain. 885-892 (SDVGSGKT) is a binding site for ATP.

This is Putative helicase L115 from Acanthamoeba polyphaga (Amoeba).